The chain runs to 112 residues: Macrodomain Ori protein (112 aa).

Residues 91-112 form a disordered region; it reads FHTLSGGKPQVEGAEDYTEADD. Residues 103–112 show a composition bias toward acidic residues; the sequence is GAEDYTEADD.

It belongs to the MaoP family.

Involved in the organization of the Ori region of the chromosome into a macrodomain (MD). It constrains DNA mobility in the Ori macrodomain and limits long-distance DNA interactions with other chromosomal regions. The polypeptide is Macrodomain Ori protein (Salmonella choleraesuis (strain SC-B67)).